The primary structure comprises 588 residues: Aspartate--tRNA ligase (588 aa).

Glutamate 177 contributes to the L-aspartate binding site. The interval 201–204 (QLFK) is aspartate. Arginine 223 is a binding site for L-aspartate. Residues 223-225 (RDE) and glutamine 232 contribute to the ATP site. Histidine 451 serves as a coordination point for L-aspartate. An ATP-binding site is contributed by glutamate 485. Arginine 492 contributes to the L-aspartate binding site. ATP is bound at residue 537 to 540 (GLDR).

This sequence belongs to the class-II aminoacyl-tRNA synthetase family. Type 1 subfamily. As to quaternary structure, homodimer.

Its subcellular location is the cytoplasm. The enzyme catalyses tRNA(Asp) + L-aspartate + ATP = L-aspartyl-tRNA(Asp) + AMP + diphosphate. Catalyzes the attachment of L-aspartate to tRNA(Asp) in a two-step reaction: L-aspartate is first activated by ATP to form Asp-AMP and then transferred to the acceptor end of tRNA(Asp). The chain is Aspartate--tRNA ligase from Staphylococcus aureus (strain Newman).